A 383-amino-acid polypeptide reads, in one-letter code: S-adenosylmethionine synthase (383 aa).

His15 provides a ligand contact to ATP. Asp17 contributes to the Mg(2+) binding site. Glu43 is a binding site for K(+). L-methionine-binding residues include Glu56 and Gln99. The segment at 99–109 is flexible loop; sequence QSPDINQGVDR. Residues 164–166, 230–231, Asp239, 245–246, Ala262, and Lys266 contribute to the ATP site; these read DAK, RF, and RK. An L-methionine-binding site is contributed by Asp239. Lys270 contacts L-methionine.

It belongs to the AdoMet synthase family. Homotetramer; dimer of dimers. It depends on Mg(2+) as a cofactor. The cofactor is K(+).

The protein localises to the cytoplasm. It catalyses the reaction L-methionine + ATP + H2O = S-adenosyl-L-methionine + phosphate + diphosphate. The protein operates within amino-acid biosynthesis; S-adenosyl-L-methionine biosynthesis; S-adenosyl-L-methionine from L-methionine: step 1/1. In terms of biological role, catalyzes the formation of S-adenosylmethionine (AdoMet) from methionine and ATP. The overall synthetic reaction is composed of two sequential steps, AdoMet formation and the subsequent tripolyphosphate hydrolysis which occurs prior to release of AdoMet from the enzyme. The protein is S-adenosylmethionine synthase of Shewanella baltica (strain OS155 / ATCC BAA-1091).